Here is a 364-residue protein sequence, read N- to C-terminus: Melatonin receptor type 1B (364 aa).

The first 28 residues, 1 to 28, serve as a signal peptide directing secretion; it reads MPDNSSIANCCAASGLAARPSWPGSAEA. The Extracellular segment spans residues 29 to 45; it reads EPPETPRAPWVAPMLST. A helical transmembrane segment spans residues 46-66; the sequence is VVIVTTAVDFVGNLLVILSVL. Residues 67–81 lie on the Cytoplasmic side of the membrane; the sequence is RNRKLRNAGNLFVVN. A helical membrane pass occupies residues 82-102; the sequence is LALADLVVALYPYPLILVAIL. At 103–115 the chain is on the extracellular side; it reads HDGWVLGEIHCKA. A disulfide bridge links Cys-113 with Cys-190. The helical transmembrane segment at 116 to 136 threads the bilayer; that stretch reads SAFVMGLSVIGSVFNITAIAI. Over 137-158 the chain is Cytoplasmic; sequence NRYWCICHSATYHRACSQWHAP. A helical transmembrane segment spans residues 159–179; the sequence is LYISLIWLLTLVALVPNFFVG. The Extracellular segment spans residues 180 to 200; that stretch reads SLEYDPRIYSCTFIQTASTQY. Residues 201-221 traverse the membrane as a helical segment; it reads TMAVVAIHFLLPIAVVSFCYL. Topologically, residues 222–255 are cytoplasmic; the sequence is RIWILVLQARRKAKAERKLRLRPSDLRSFLTMFA. Residues 256–276 traverse the membrane as a helical segment; sequence VFVVFAICWAPLNCIGLAVAI. Residues 277–287 lie on the Extracellular side of the membrane; that stretch reads NPEAMALQIPE. A helical membrane pass occupies residues 288 to 308; the sequence is GLFVTSYFLAYFNSCLNAIVY. At 309–364 the chain is on the cytoplasmic side; it reads GLLNQNFRREYKRILSALWSTGRCFHDASKCHLTEDLQGPVPPAAMATIPVQEGAL.

It belongs to the G-protein coupled receptor 1 family. In terms of tissue distribution, expressed in the hippocampus, kidney, and ovary.

Its subcellular location is the cell membrane. In terms of biological role, high affinity receptor for melatonin. The activity of this receptor is mediated by pertussis toxin sensitive G proteins that inhibits adenylate cyclase activity. The polypeptide is Melatonin receptor type 1B (Rattus norvegicus (Rat)).